The primary structure comprises 115 residues: Large ribosomal subunit protein bL20 (115 aa).

Belongs to the bacterial ribosomal protein bL20 family.

In terms of biological role, binds directly to 23S ribosomal RNA and is necessary for the in vitro assembly process of the 50S ribosomal subunit. It is not involved in the protein synthesizing functions of that subunit. The chain is Large ribosomal subunit protein bL20 from Borrelia turicatae (strain 91E135).